The chain runs to 663 residues: Polyunsaturated fatty acid lipoxygenase ALOX15 (663 aa).

A PLAT domain is found at 2–115 (GVYRIRVSTG…ILSLPEGTGC (114 aa)). A Lipoxygenase domain is found at 116–663 (TVVEDSQGLF…PSMVENSVAI (548 aa)). Position 149 is a phosphoserine (serine 149). The Fe cation site is built by histidine 361, histidine 366, histidine 541, histidine 545, and isoleucine 663.

This sequence belongs to the lipoxygenase family. In terms of assembly, interacts with PEBP1; in response to IL13/interleukin-13, prevents the interaction of PEBP1 with RAF1 to activate the ERK signaling cascade. It depends on Fe cation as a cofactor. As to expression, detected in leukocytes, lung and aorta.

The protein localises to the cytoplasm. Its subcellular location is the cytosol. It localises to the cell membrane. The protein resides in the lipid droplet. It catalyses the reaction (5Z,8Z,11Z,14Z)-eicosatetraenoate + O2 = (12S)-hydroperoxy-(5Z,8Z,10E,14Z)-eicosatetraenoate. The catalysed reaction is (5Z,8Z,11Z,14Z)-eicosatetraenoate + O2 = (15S)-hydroperoxy-(5Z,8Z,11Z,13E)-eicosatetraenoate. It carries out the reaction (9Z,12Z)-octadecadienoate + O2 = (13S)-hydroperoxy-(9Z,11E)-octadecadienoate. The enzyme catalyses (12S)-hydroperoxy-(5Z,8Z,10E,14Z)-eicosatetraenoate = (8S)-hydroxy-(11S,12S)-epoxy-(5Z,9E,14Z)-eicosatrienoate. It catalyses the reaction (5Z,8Z,11Z,14Z)-eicosatetraenoate + 2 O2 = (14R,15S)-dihydroperoxy-(5Z,8Z,10E,12E)-eicosatetraenoate. The catalysed reaction is (5Z,8Z,11Z,14Z)-eicosatetraenoate + 2 O2 = (8S,15S)-dihydroperoxy-(5Z,9E,11Z,13E)-eicosatetraenoate. It carries out the reaction (14S,15R)-epoxy-(5Z,8Z,11Z)-eicosatrienoate + O2 = (8S)-hydroperoxy-(14S,15R)-epoxy-(5Z,9E,11Z)-eicosatrienoate. The enzyme catalyses (14S,15R)-epoxy-(5Z,8Z,11Z)-eicosatrienoate + O2 = (12S)-hydroperoxy-(14S,15R)-epoxy-(5Z,8Z,10E)-eicosatrienoate. It catalyses the reaction (14R,15S)-epoxy-(5Z,8Z,11Z)-eicosatrienoate + O2 = (5S)-hydroperoxy-(14R,15S)-epoxy-(6E,8Z,11Z)-eicosatrienoate. The catalysed reaction is (14R,15S)-epoxy-(5Z,8Z,11Z)-eicosatrienoate + O2 = (12S)-hydroperoxy-(14R,15S)-epoxy-(5Z,8Z,10E)-eicosatrienoate. It carries out the reaction (15R)-hydroperoxy-(5Z,8Z,11Z,13E)-eicosatetraenoate = 15-oxo-(5Z,8Z,11Z,13E)-eicosatetraenoate + H2O. The enzyme catalyses (15S)-hydroperoxy-(5Z,8Z,11Z,13E)-eicosatetraenoate = (14S,15S)-epoxy-(5Z,8Z,10E,12E)-eicosatetraenoate + H2O. It catalyses the reaction (4Z,7Z,10Z,13Z,16Z)-docosapentaenoate + O2 = 14-hydroperoxy-(4Z,7Z,10Z,12E,16Z)-docosapentaenoate. The catalysed reaction is (7Z,10Z,13Z,16Z,19Z)-docosapentaenoate + O2 = 14-hydroperoxy-(7Z,10Z,12E,16Z,19Z)-docosapentaenoate. It carries out the reaction (4Z,7Z,10Z,13Z,16Z,19Z)-docosahexaenoate + O2 = (14S)-hydroperoxy-(4Z,7Z,10Z,12E,16Z,19Z)-docosahexaenoate. The enzyme catalyses (4Z,7Z,10Z,13Z,16Z,19Z)-docosahexaenoate + O2 = (17S)-hydroperoxy-(4Z,7Z,10Z,13Z,15E,19Z)-docosahexaenoate. It catalyses the reaction (7S)-hydroperoxy-(4Z,8E,10Z,13Z,16Z,19Z)-docosahexaenoate + O2 = (7S,14S)-dihydroperoxy-(4Z,8E,10Z,12E,16Z,19Z)-docosahexaenoate. The catalysed reaction is (7S)-hydroperoxy-(4Z,8E,10Z,13Z,16Z,19Z)-docosahexaenoate + O2 = (7S,17S)-dihydroperoxy-(4Z,8E,10Z,13Z,15E,19Z)-docosahexaenoate. It carries out the reaction (4Z,7Z,10Z,13Z,16Z,19Z)-docosahexaenoate + O2 = (11S)-hydroperoxy-(4Z,7Z,9E,13Z,16Z,19Z)-docosahexaenoate. The enzyme catalyses N-(5Z,8Z,11Z,14Z)-eicosatetraenoyl-taurine + O2 = N-(12S)-hydroperoxy-(5Z,8Z,10E,14Z)-eicosatetraenoyl-taurine. It catalyses the reaction N-(5Z,8Z,11Z,14Z)-eicosatetraenoyl-gamma-aminobutanoate + O2 = N-(12S)-hydroperoxy-(5Z,8Z,10E,14Z)-eicosatetraenoyl-gamma-aminobutanoate. The catalysed reaction is N-(5Z,8Z,11Z,14Z)-eicosatetraenoyl-glycine + O2 = N-(12S)-hydroperoxy-(5Z,8Z,10E,14Z)-eicosatetraenoyl-glycine. It carries out the reaction N-(5Z,8Z,11Z,14Z)-eicosatetraenoyl-L-alanine + O2 = N-(12S)-hydroperoxy-(5Z,8Z,10E,14Z)-eicosatetraenoyl-alanine. The enzyme catalyses N-(5Z,8Z,11Z,14Z)-eicosatetraenoyl-taurine + O2 = N-(15S)-hydroperoxy-(5Z,8Z,11Z,13E)-eicosatetraenoyl-taurine. It catalyses the reaction N-(5Z,8Z,11Z,14Z)-eicosatetraenoyl-gamma-aminobutanoate + O2 = N-(15S)-hydroperoxy-(5Z,8Z,11Z,13E)-eicosatetraenoyl-gamma-aminobutanoate. The catalysed reaction is N-(5Z,8Z,11Z,14Z)-eicosatetraenoyl-glycine + O2 = N-(15S)-hydroperoxy-(5Z,8Z,11Z,13E)-eicosatetraenoyl-glycine. It carries out the reaction N-(5Z,8Z,11Z,14Z)-eicosatetraenoyl-L-alanine + O2 = N-(15S)-hydroperoxy-(5Z,8Z,11Z,13E)-eicosatetraenoyl-alanine. The protein operates within lipid metabolism; hydroperoxy eicosatetraenoic acid biosynthesis. Functionally, non-heme iron-containing dioxygenase that catalyzes the stereo-specific peroxidation of free and esterified polyunsaturated fatty acids generating a spectrum of bioactive lipid mediators. It inserts peroxyl groups at C12 or C15 of arachidonate ((5Z,8Z,11Z,14Z)-eicosatetraenoate) producing both 12-hydroperoxyeicosatetraenoate/12-HPETE and 15-hydroperoxyeicosatetraenoate/15-HPETE. It may then act on 12-HPETE to produce hepoxilins, which may show pro-inflammatory properties. Can also peroxidize linoleate ((9Z,12Z)-octadecadienoate) to 13-hydroperoxyoctadecadienoate. May participate in the sequential oxidations of DHA ((4Z,7Z,10Z,13Z,16Z,19Z)-docosahexaenoate) to generate specialized pro-resolving mediators (SPMs)like resolvin D5 ((7S,17S)-diHPDHA) and (7S,14S)-diHPDHA, that actively down-regulate the immune response and have anti-aggregation properties with platelets. Can convert epoxy fatty acids to hydroperoxy-epoxides derivatives followed by an intramolecular nucleophilic substitution leading to the formation of monocyclic endoperoxides. Plays an important role during the maintenance of self-tolerance by peroxidizing membrane-bound phosphatidylethanolamine which can then signal the sorting process for clearance of apoptotic cells during inflammation and prevent an autoimmune response. In addition to its role in the immune and inflammatory responses, this enzyme may play a role in epithelial wound healing in the cornea through production of lipoxin A4 (LXA(4)) and docosahexaenoic acid-derived neuroprotectin D1 (NPD1; 10R,17S-HDHA), both lipid autacoids exhibit anti-inflammatory and neuroprotective properties. Furthermore, it may regulate actin polymerization which is crucial for several biological processes such as the phagocytosis of apoptotic cells. It is also implicated in the generation of endogenous ligands for peroxisome proliferator activated receptor (PPAR-gamma), hence modulating macrophage development and function. It may also exert a negative effect on skeletal development by regulating bone mass through this pathway. As well as participates in ER stress and downstream inflammation in adipocytes, pancreatic islets, and liver. Finally, it is also involved in the cellular response to IL13/interleukin-13. The sequence is that of Polyunsaturated fatty acid lipoxygenase ALOX15 from Rattus norvegicus (Rat).